Consider the following 790-residue polypeptide: Cadherin-18 (790 aa).

Positions 1–24 (MKITSTSCICPVLVCLCFVQRCYG) are cleaved as a signal peptide. A propeptide spanning residues 25 to 53 (TTHHGSIRGTRNQTKHIEGETEVHHRPKR) is cleaved from the precursor. N-linked (GlcNAc...) asparagine glycosylation is present at N36. 5 Cadherin domains span residues 54 to 159 (GWVW…APKF), 160 to 268 (TDGP…PPRF), 269 to 383 (PQKH…PPLF), 384 to 486 (SMPS…DNPP), and 487 to 608 (ELAR…FLSS). Residues 54–608 (GWVWNQFFVL…TCHAEAFLSS (555 aa)) lie on the Extracellular side of the membrane. N255 carries an N-linked (GlcNAc...) asparagine glycan. N-linked (GlcNAc...) asparagine glycosylation is found at N455 and N536. The helical transmembrane segment at 609 to 636 (AGLSTGALIAILLCVVILLAIVVLFITL) threads the bilayer. Topologically, residues 637–790 (RRSKKEPLII…YGEIESERTT (154 aa)) are cytoplasmic. At S786 the chain carries Phosphoserine.

The protein localises to the cell membrane. Functionally, cadherins are calcium-dependent cell adhesion proteins. They preferentially interact with themselves in a homophilic manner in connecting cells; cadherins may thus contribute to the sorting of heterogeneous cell types. This is Cadherin-18 (CDH18) from Bos taurus (Bovine).